The chain runs to 640 residues: ATP-dependent rRNA helicase spb4 (640 aa).

The Q motif signature appears at 14 to 42 (WDAVTPALSEWVLEAMSSMGFTRMTPVQA). One can recognise a Helicase ATP-binding domain in the interval 45–249 (IPLFMAHKDV…RVGLRNPVKV (205 aa)). Position 58–65 (58–65 (AVTGSGKT)) interacts with ATP. A DEAD box motif is present at residues 197-200 (DEAD). One can recognise a Helicase C-terminal domain in the interval 283-437 (ALKRILSSVQ…LITFSDADAA (155 aa)). Positions 521–629 (AYKDKQREKR…AAKAAGAKAD (109 aa)) form a coiled coil. Disordered stretches follow at residues 531–595 (RKEL…EKQK) and 607–640 (RKKNEEERRLRRAAAKAAGAKADGDDEEEFQGFD). Basic residues predominate over residues 568–582 (KKLKRREQKKSKHEK). Positions 583–595 (ARWEKMTEEEKQK) are enriched in basic and acidic residues. The span at 630-640 (GDDEEEFQGFD) shows a compositional bias: acidic residues.

Belongs to the DEAD box helicase family. DDX55/SPB4 subfamily. Component of pre-60S ribosomal complexes.

It is found in the nucleus. Its subcellular location is the nucleolus. It carries out the reaction ATP + H2O = ADP + phosphate + H(+). Its function is as follows. ATP-binding RNA helicase involved in the biogenesis of 60S ribosomal subunits. Binds 90S pre-ribosomal particles and dissociates from pre-60S ribosomal particles after processing of 27SB pre-rRNA. Required for the normal formation of 18S rRNA through the processing of pre-rRNAs at sites A0, A1 and A2, and the normal formation of 25S and 5.8S rRNAs through the processing of pre-rRNAs at sites C1 and C2. This chain is ATP-dependent rRNA helicase spb4, found in Neosartorya fischeri (strain ATCC 1020 / DSM 3700 / CBS 544.65 / FGSC A1164 / JCM 1740 / NRRL 181 / WB 181) (Aspergillus fischerianus).